Reading from the N-terminus, the 358-residue chain is MKRNLNESSARSTAGCLPVPLFNQKKRNRQPLTSNPLQNDPGVSTVSDSYGSPSFPTDWAWEAVNPEVAPLKKTVNTGQIPASASYPWRSQDSVSKSIQSNAERSQSAWGYRGNNRNTSLRTWDFRPQHKTVSPAANSEFSSCPVNLGAQQQKQFQTPEFPNLPGHKEAEVPRQTCLSKLPGSTMKGPDRASALQAFKPSFQQNPFKKTVLGDIPRENSLKEGTLHQLKEKDNSLRIISAVIESMKYWRAHVQKTVLLFEILAVLDSAVTSGPHYSKTFLMRDGKNILPCVFYEIDRELPRLIRGRVHRCVGHYDPDKNIFKCVSVRPASASEQKTFQAFVTIADAEMKYHTKVTNEM.

Polar residues-rich tracts occupy residues 1–12 (MKRNLNESSARS), 30–51 (QPLT…DSYG), 81–121 (PASA…TSLR), and 150–159 (QQQKQFQTPE). 3 disordered regions span residues 1–51 (MKRN…DSYG), 81–122 (PASA…SLRT), and 150–172 (QQQK…AEVP).

In terms of assembly, component of a multiprotein complex with MEIOB and RPA2. Interacts with MEIOB. Interacts with the complex BRME1:HSF2BP:BRCA2. Specifically expressed in gonadal germ cells, when male and female germ cells progress through prophase of meiosis I.

The protein localises to the chromosome. Meiosis-specific protein required for homologous recombination in meiosis I. In Mus musculus (Mouse), this protein is Spermatogenesis-associated protein 22.